Here is a 320-residue protein sequence, read N- to C-terminus: Tetraacyldisaccharide 4'-kinase (320 aa).

53–60 (SVGGNGKT) contacts ATP.

Belongs to the LpxK family.

It catalyses the reaction a lipid A disaccharide + ATP = a lipid IVA + ADP + H(+). It functions in the pathway glycolipid biosynthesis; lipid IV(A) biosynthesis; lipid IV(A) from (3R)-3-hydroxytetradecanoyl-[acyl-carrier-protein] and UDP-N-acetyl-alpha-D-glucosamine: step 6/6. Transfers the gamma-phosphate of ATP to the 4'-position of a tetraacyldisaccharide 1-phosphate intermediate (termed DS-1-P) to form tetraacyldisaccharide 1,4'-bis-phosphate (lipid IVA). The polypeptide is Tetraacyldisaccharide 4'-kinase (Psychromonas ingrahamii (strain DSM 17664 / CCUG 51855 / 37)).